Consider the following 497-residue polypeptide: 3-octaprenyl-4-hydroxybenzoate carboxy-lyase (497 aa).

A Mn(2+)-binding site is contributed by Asn175. Prenylated FMN contacts are provided by residues Ile178–Arg180, Arg192–Leu194, and Arg197–Gly198. Glu241 serves as a coordination point for Mn(2+). The Proton donor role is filled by Asp290.

Belongs to the UbiD family. As to quaternary structure, homohexamer. Prenylated FMN is required as a cofactor. It depends on Mn(2+) as a cofactor.

The protein resides in the cell membrane. It catalyses the reaction a 4-hydroxy-3-(all-trans-polyprenyl)benzoate + H(+) = a 2-(all-trans-polyprenyl)phenol + CO2. Its pathway is cofactor biosynthesis; ubiquinone biosynthesis. In terms of biological role, catalyzes the decarboxylation of 3-octaprenyl-4-hydroxy benzoate to 2-octaprenylphenol, an intermediate step in ubiquinone biosynthesis. The polypeptide is 3-octaprenyl-4-hydroxybenzoate carboxy-lyase (Escherichia coli O157:H7).